A 181-amino-acid polypeptide reads, in one-letter code: Oligoribonuclease (181 aa).

In terms of domain architecture, Exonuclease spans 8-171; sequence LIWIDLEMTG…DDIRESVAEL (164 aa). The active site involves tyrosine 129.

The protein belongs to the oligoribonuclease family.

It localises to the cytoplasm. In terms of biological role, 3'-to-5' exoribonuclease specific for small oligoribonucleotides. This is Oligoribonuclease from Yersinia pseudotuberculosis serotype O:1b (strain IP 31758).